The chain runs to 245 residues: Polynucleotide 3'-phosphatase (245 aa).

This sequence belongs to the DNA 3' phosphatase family.

It localises to the nucleus. The catalysed reaction is a 3'end (2'-deoxyribonucleotide 3'-phosphate)-DNA + H2O = a 3'-end 2'-deoxyribonucleotide-DNA + phosphate. In terms of biological role, dephosphorylate DNA's 3'-phosphate termini. Has a role in the repair of breaks in single-stranded DNA. This chain is Polynucleotide 3'-phosphatase (TPP1), found in Saccharomyces mikatae (Yeast).